The following is a 404-amino-acid chain: Protein L-Myc-1b (404 aa).

Disordered regions lie at residues 175-195 (KKQV…EEID) and 238-331 (QQHN…FLER). Over residues 287 to 315 (VPAQSPTVSASPTHTSYHLKSQPSSPQSS) the composition is skewed to polar residues. Residues 321–373 (DKRKTHNFLERKRRNDLRSRFLALRDEIPGLVDCPKTPKVVILTKATEYLRTL) form the bHLH domain. Residues 373 to 401 (LHVSDRQKAQEKKQLKSKQQQLLRRLAEL) are leucine-zipper.

As to quaternary structure, efficient DNA binding requires dimerization with another bHLH protein. Binds DNA as a heterodimer with max.

It localises to the nucleus. This Danio rerio (Zebrafish) protein is Protein L-Myc-1b.